Here is a 500-residue protein sequence, read N- to C-terminus: FAD-linked oxidoreductase srdI (500 aa).

The signal sequence occupies residues 1 to 20 (MHLSSSLLFTSALLAGGINA). The N-linked (GlcNAc...) asparagine glycan is linked to N47. Positions 69-241 (YRPPSYQAAI…TQATYKMHKS (173 aa)) constitute an FAD-binding PCMH-type domain. Residues N257 and N282 are each glycosylated (N-linked (GlcNAc...) asparagine).

The protein belongs to the oxygen-dependent FAD-linked oxidoreductase family. FAD is required as a cofactor.

FAD-linked oxidoreductase; part of the gene cluster that mediates the biosynthesis of sordarial, a salicylic aldehyde structurally related to the phytotoxin pyriculol. The most interesting aspect of this pathway is formation of an aromatic product from the highly reducing polyketide synthase srdA. SrdA synthesizes a reduced polyketide chain from one molecule of acetyl-CoA and five molecules of malonyl-CoA. The polyketide chain is then reductively released as an aldehyde. The oxidoreductases srdC, srdD and srdE then oxidize one of the hydroxy groups to facilitate the intramolecular aldol condensation, followed by dehydration to yield a salicylic aldehyde. This aldehyde can undergo facile reduction by endogenous reductases to yield the alcohol 1-hydroxy-2-hydroxymethyl-3-pent-1,3-dienylbenzene. The flavin-dependent srdI counteract against the propensity of the aldehydes to be reduced under physiological conditions and is responsible for reoxidizing 1-hydroxy-2-hydroxymethyl-3-pent-1,3-dienylbenzene back to the salicylic aldehyde. This salicylic aldehyde is then selectively epoxidized by the cupin-domain-containing oxidoreductase srdB to yield the epoxide, which can be hydrolyzed stereoselectively by the hydrolase srdG to give the final product sordarial. In Neurospora crassa (strain ATCC 24698 / 74-OR23-1A / CBS 708.71 / DSM 1257 / FGSC 987), this protein is FAD-linked oxidoreductase srdI.